A 299-amino-acid chain; its full sequence is tRNA dimethylallyltransferase (299 aa).

Residue 11–18 (GPTGSGKS) coordinates ATP. 13 to 18 (TGSGKS) provides a ligand contact to substrate.

The protein belongs to the IPP transferase family. As to quaternary structure, monomer. The cofactor is Mg(2+).

The enzyme catalyses adenosine(37) in tRNA + dimethylallyl diphosphate = N(6)-dimethylallyladenosine(37) in tRNA + diphosphate. Functionally, catalyzes the transfer of a dimethylallyl group onto the adenine at position 37 in tRNAs that read codons beginning with uridine, leading to the formation of N6-(dimethylallyl)adenosine (i(6)A). This chain is tRNA dimethylallyltransferase, found in Pseudarthrobacter chlorophenolicus (strain ATCC 700700 / DSM 12829 / CIP 107037 / JCM 12360 / KCTC 9906 / NCIMB 13794 / A6) (Arthrobacter chlorophenolicus).